A 566-amino-acid polypeptide reads, in one-letter code: MKQSMVFSPTLREVPADAEIKSHQLLLRAGFMRQNASGIYSFLPFGLKVLHKVERIVREEMERAGAVELLMPAMQAAELWQESGRWYSYGSELMRMKDRNAREFALGATHEEVITDLVRDEVKSYKKLPLTLYQIQTKFRDEQRPRFGLLRGREFLMKDAYSFHATQESLDEVYDRLYKAYSNIFARCGLNFRAVIADSGAMGGKDTHEFMVLSDVGEDTIAYSDTSDYAANIEMAPVVATYTKSDEAEKELEKVATPDQKAIEEVSAFLNIEADKCIKSMVFKVDEKLVVVLVRGDHEVNDVKVKNVYGASVVELASHEEVKELLNCEVGSLGPIGVNGDIEIIADHAVASIVNGCSGANEEGFHYVNVNPERDFKVSQYTDLRFIQEGDQSPDGNGTILFARGIEVGHVFKLGTRYSEAMNATFLDENGKTQPLIMGCYGIGVSRTVAAIAEQFNDENGLVWPKAVAPFHVHVIPVNMKSDAQREMGENIYNSLQEQGYEVLLDDRAERAGVKFADADLFGLPVRVTVGKKADEGIVEVKVRATGESEEIKVEELQTYIANILK.

Belongs to the class-II aminoacyl-tRNA synthetase family. ProS type 1 subfamily. In terms of assembly, homodimer.

The protein resides in the cytoplasm. It catalyses the reaction tRNA(Pro) + L-proline + ATP = L-prolyl-tRNA(Pro) + AMP + diphosphate. Its function is as follows. Catalyzes the attachment of proline to tRNA(Pro) in a two-step reaction: proline is first activated by ATP to form Pro-AMP and then transferred to the acceptor end of tRNA(Pro). As ProRS can inadvertently accommodate and process non-cognate amino acids such as alanine and cysteine, to avoid such errors it has two additional distinct editing activities against alanine. One activity is designated as 'pretransfer' editing and involves the tRNA(Pro)-independent hydrolysis of activated Ala-AMP. The other activity is designated 'posttransfer' editing and involves deacylation of mischarged Ala-tRNA(Pro). The misacylated Cys-tRNA(Pro) is not edited by ProRS. This is Proline--tRNA ligase 1 from Bacillus cereus (strain ZK / E33L).